Here is a 182-residue protein sequence, read N- to C-terminus: Large ribosomal subunit protein uL6 (182 aa).

Belongs to the universal ribosomal protein uL6 family. Part of the 50S ribosomal subunit.

In terms of biological role, this protein binds to the 23S rRNA, and is important in its secondary structure. It is located near the subunit interface in the base of the L7/L12 stalk, and near the tRNA binding site of the peptidyltransferase center. The polypeptide is Large ribosomal subunit protein uL6 (Dehalococcoides mccartyi (strain ATCC BAA-2100 / JCM 16839 / KCTC 5957 / BAV1)).